The sequence spans 132 residues: MQSFHVLQLIAVGFGGALGAMARFIVSNQVYAWWGRDFAWGTLVVNSLGSFAIGLIMILMIDKFHASVEMRSFLIVGFLGAFTTFSTFSFETYSFLQTGEITKAMLNIGVSVLTGLFAVWLGIWTGKQFFSP.

The next 4 helical transmembrane spans lie at 6–26 (VLQL…RFIV), 41–61 (GTLV…ILMI), 73–93 (FLIV…FETY), and 104–124 (AMLN…LGIW). 2 residues coordinate Na(+): Gly80 and Thr83.

The protein belongs to the fluoride channel Fluc/FEX (TC 1.A.43) family.

The protein resides in the cell inner membrane. The catalysed reaction is fluoride(in) = fluoride(out). Its activity is regulated as follows. Na(+) is not transported, but it plays an essential structural role and its presence is essential for fluoride channel function. Its function is as follows. Fluoride-specific ion channel. Important for reducing fluoride concentration in the cell, thus reducing its toxicity. The polypeptide is Fluoride-specific ion channel FluC (Hydrogenovibrio crunogenus (strain DSM 25203 / XCL-2) (Thiomicrospira crunogena)).